Here is a 175-residue protein sequence, read N- to C-terminus: Outer membrane protein assembly factor BamE (175 aa).

Residues 1-21 (MQNTKLLLTSFTFVGLLALAG) form the signal peptide. The N-palmitoyl cysteine moiety is linked to residue Cys22. Cys22 is lipidated: S-diacylglycerol cysteine. Disordered stretches follow at residues 117–147 (ALLG…KPGS) and 156–175 (IDNV…TSPQ).

Belongs to the BamE family. As to quaternary structure, part of the Bam complex.

It is found in the cell outer membrane. Its function is as follows. Part of the outer membrane protein assembly complex, which is involved in assembly and insertion of beta-barrel proteins into the outer membrane. May have a structural role in maintaining the cell envelope integrity. This Pseudomonas fluorescens protein is Outer membrane protein assembly factor BamE.